A 1173-amino-acid polypeptide reads, in one-letter code: Pyruvate-flavodoxin oxidoreductase (1173 aa).

2 consecutive 4Fe-4S ferredoxin-type domains span residues 681 to 710 and 735 to 766; these read NVPV…PVLI and YRLA…MQPL. 11 residues coordinate [4Fe-4S] cluster: cysteine 690, cysteine 693, cysteine 696, cysteine 700, cysteine 744, cysteine 747, cysteine 750, cysteine 754, cysteine 810, cysteine 813, and cysteine 838. A compositionally biased stretch (basic and acidic residues) spans 922 to 933; it reads GEGTRERAEKVG. The segment at 922–946 is disordered; the sequence is GEGTRERAEKVGDTSGFANAREKSR. Position 1075 (cysteine 1075) interacts with [4Fe-4S] cluster.

This sequence belongs to the pyruvate:ferredoxin/flavodoxin oxidoreductase family. The cofactor is [4Fe-4S] cluster.

The enzyme catalyses oxidized [flavodoxin] + pyruvate + CoA + 2 H(+) = reduced [flavodoxin] + acetyl-CoA + CO2. In terms of biological role, oxidoreductase required for the transfer of electrons from pyruvate to flavodoxin, which reduces nitrogenase. The polypeptide is Pyruvate-flavodoxin oxidoreductase (nifJ) (Enterobacter agglomerans (Erwinia herbicola)).